The sequence spans 278 residues: MKVIEKIEEMKKISREILESKKAIGFVPTMGFLHEGHLSLVKAAKSENDITVVSIFVNPTQFGPNEDYNNYPRDLERDLSMLKDMEVDYVFVPSVEEMYPDSFSTYVEEIKLSRFLCGASRPGHFRGVCTVVTKLFNIVKPTRAYFGQKDAQQFRVLRRMVRDLNMDVELVEMPIVREPDGLALSSRNTYLNDEERKEAVRLYKSLLKAKELIESGEKDVEIIKNEMKKILTHPLLRIDYIEIVDEENLEPVEKIDRRVIIAIAVFVGRARLIDNMII.

Residue M30–H37 coordinates ATP. Residue H37 is the Proton donor of the active site. Residue Q61 coordinates (R)-pantoate. Q61 lines the beta-alanine pocket. G147 to D150 provides a ligand contact to ATP. Q153 lines the (R)-pantoate pocket. ATP contacts are provided by residues V176 and L184–R187.

It belongs to the pantothenate synthetase family. Homodimer.

It localises to the cytoplasm. The catalysed reaction is (R)-pantoate + beta-alanine + ATP = (R)-pantothenate + AMP + diphosphate + H(+). The protein operates within cofactor biosynthesis; (R)-pantothenate biosynthesis; (R)-pantothenate from (R)-pantoate and beta-alanine: step 1/1. Catalyzes the condensation of pantoate with beta-alanine in an ATP-dependent reaction via a pantoyl-adenylate intermediate. The sequence is that of Pantothenate synthetase from Thermosipho africanus (strain TCF52B).